A 602-amino-acid chain; its full sequence is Transcription factor COE4 (602 aa).

Residues 64 to 67 (RKSN) are interaction with DNA. The segment at 152–171 (CRVLLTHEIMCSRCCDRKSC) adopts a C5-type zinc-finger fold. Interaction with DNA stretches follow at residues 198–205 (NCLKNAGN) and 237–240 (NNSK). The region spanning 256–338 (PCIKAISPGE…CKGCPGRFVY (83 aa)) is the IPT/TIG domain. 2 disordered regions span residues 448-476 (PEPG…SGYG) and 558-602 (PVLR…LAYS). Residues 560–569 (LRPPSSPPQA) show a composition bias toward pro residues.

This sequence belongs to the COE family. In terms of assembly, forms either a homodimer or a heterodimer with a related family member. Interacts with MAPK3/ERK1. Interacts with STAT5A. Most highly expressed in cytotoxic NK cells, especially CD16(+) NK cells, followed by CD8(+) T-cells.

The protein localises to the nucleus. Functionally, transcription factor. Binds to specific sequence motif 5'-CCCNNG[GA]G-3' in regulatory elements of putative target immunoregulatory genes such as NKG7, GZMA, and TBX21. Positively modulates transcription of NKG7. May play a role in regulating FAS/CD95-mediated apoptosis in cytotoxic NK cells and T-cells, probably downstream of interleukin IL2 signaling. The polypeptide is Transcription factor COE4 (EBF4) (Homo sapiens (Human)).